Consider the following 302-residue polypeptide: Melibiose operon regulatory protein (302 aa).

Positions 194–292 constitute an HTH araC/xylS-type domain; the sequence is SQMLGFIAEN…GMSPQQYRKL (99 aa). 2 DNA-binding regions (H-T-H motif) span residues 211–232 and 259–282; these read NDVA…QRVM and ILDI…GKYV.

Transcription activator for the expression of the melAB operon. MelR binds at two sites located upstream of the melAB transcription site. This is Melibiose operon regulatory protein (melR) from Escherichia coli O6:H1 (strain CFT073 / ATCC 700928 / UPEC).